The sequence spans 877 residues: Putative ankyrin repeat protein R748 (877 aa).

6 ANK repeats span residues 44–74, 79–109, 115–145, 202–231, 243–272, and 282–311; these read IRHI…TINV, QNNT…NINY, IGIS…AIQQ, MGYR…SINE, NNND…PIHM, and LVPT…SIQA. The disordered stretch occupies residues 525 to 579; that stretch reads DSDEDPVCDSNESDNSNDINNHVKSDNKLNSSNDYYDEDDSEDNYNNQSDDEPLV. Positions 533–544 are enriched in low complexity; sequence DSNESDNSNDIN.

This Acanthamoeba polyphaga mimivirus (APMV) protein is Putative ankyrin repeat protein R748.